Reading from the N-terminus, the 337-residue chain is Biotin synthase 1 (337 aa).

Residues 1–23 (MSSVLTQPLAFHPPRPAVQPREH) form a disordered region. The Radical SAM core domain occupies 57-284 (TRVEFATLLS…TARVRLSAGR (228 aa)). The [4Fe-4S] cluster site is built by Cys-72, Cys-76, and Cys-79. Residues Cys-116, Cys-147, Cys-207, and Arg-279 each coordinate [2Fe-2S] cluster.

This sequence belongs to the radical SAM superfamily. Biotin synthase family. Homodimer. Requires [4Fe-4S] cluster as cofactor. [2Fe-2S] cluster serves as cofactor.

The enzyme catalyses (4R,5S)-dethiobiotin + (sulfur carrier)-SH + 2 reduced [2Fe-2S]-[ferredoxin] + 2 S-adenosyl-L-methionine = (sulfur carrier)-H + biotin + 2 5'-deoxyadenosine + 2 L-methionine + 2 oxidized [2Fe-2S]-[ferredoxin]. It functions in the pathway cofactor biosynthesis; biotin biosynthesis; biotin from 7,8-diaminononanoate: step 2/2. Functionally, catalyzes the conversion of dethiobiotin (DTB) to biotin by the insertion of a sulfur atom into dethiobiotin via a radical-based mechanism. This Polaromonas sp. (strain JS666 / ATCC BAA-500) protein is Biotin synthase 1.